The following is a 464-amino-acid chain: Cytoplasmic tRNA 2-thiolation protein 2 (464 aa).

It belongs to the CTU2/NCS2 family.

It localises to the cytoplasm. The protein operates within tRNA modification; 5-methoxycarbonylmethyl-2-thiouridine-tRNA biosynthesis. Its function is as follows. Plays a central role in 2-thiolation of mcm(5)S(2)U at tRNA wobble positions of tRNA(Lys), tRNA(Glu) and tRNA(Gln). May act by forming a heterodimer with NCS6/CTU1 that ligates sulfur from thiocarboxylated URM1 onto the uridine of tRNAs at wobble position. In Oryza sativa subsp. japonica (Rice), this protein is Cytoplasmic tRNA 2-thiolation protein 2.